A 151-amino-acid chain; its full sequence is Large ribosomal subunit protein bL9 (151 aa).

This sequence belongs to the bacterial ribosomal protein bL9 family.

In terms of biological role, binds to the 23S rRNA. The protein is Large ribosomal subunit protein bL9 of Dehalococcoides mccartyi (strain ATCC BAA-2266 / KCTC 15142 / 195) (Dehalococcoides ethenogenes (strain 195)).